Here is a 320-residue protein sequence, read N- to C-terminus: Olfactory receptor 51E2 (320 aa).

At 1 to 27 the chain is on the extracellular side; sequence MSSCNFTHATFLLIGIPGLEEAHFWFG. The N-linked (GlcNAc...) asparagine glycan is linked to Asn5. A helical transmembrane segment spans residues 28-48; it reads FPLLSMYAVALFGNCIVVFIV. Over 49–53 the chain is Cytoplasmic; it reads RTERS. Residues 54 to 74 traverse the membrane as a helical segment; sequence LHAPMYLFLCMLAAIDLALST. Residues 75-98 are Extracellular-facing; the sequence is STMPKILALFWFDSREITFDACLA. The cysteines at positions 96 and 178 are disulfide-linked. Residues 99 to 119 traverse the membrane as a helical segment; the sequence is QMFFIHTLSAIESTILLAMAF. The Cytoplasmic segment spans residues 120–141; that stretch reads DRYVAICHPLRHAAVLNNTVTV. The helical transmembrane segment at 142 to 162 threads the bilayer; it reads QIGMVALVRGSLFFFPLPLLI. The Extracellular segment spans residues 163 to 200; the sequence is KRLAFCHSNVLSHSYCVHQDVMKLAYTDTLPNVVYGLT. Residues 201–221 form a helical membrane-spanning segment; that stretch reads AILLVMGVDVMFISLSYFLII. Residues 222–239 lie on the Cytoplasmic side of the membrane; sequence RTVLQLPSKSERAKAFGT. Residues 240–260 form a helical membrane-spanning segment; that stretch reads CVSHISVVLAFYVPLIGLSVV. Residues 261–269 lie on the Extracellular side of the membrane; sequence HRFGNSLDP. A helical membrane pass occupies residues 270–290; the sequence is IVHVLMGDVYLLLPPVINPII. At 291–320 the chain is on the cytoplasmic side; the sequence is YGAKTKQIRTRVLAMFKISCDKDIEAGGNT.

The protein belongs to the G-protein coupled receptor 1 family. In brain, expressed in medulla oblongata by cells close to the fourth ventricle, in the area postrema, the nucleus tractus solitarius. Expressed in olfactory epithelium and vomeronasal organ. Expressed in kidney by large renal vessels, renal afferent arterioles, and extrarenal vascular beds. In small resistance vessels the expression is restricted to cells of the juxtaglomerular afferent arteriole, which mediate renin secretion. Also detected in small blood vessels in a variety of tissues including heart, diaphragm, skeletal muscle, and skin. In the heart, esophagus, and stomach it is detected in axons of autonomic neurons and neurons of the enteric plexus. Also detected in colon and liver. Expressed in the glomus cells of the carotid body.

It is found in the cell membrane. It localises to the early endosome membrane. Functionally, olfactory receptor. The activity of this receptor is probably mediated by G-proteins which induce elevation of intracellular Ca(2+), cAMP and activation of phosphorylation of the protein kinases PKA and MAPK3/MAPK1. Activation of OR51E2 may affect melanocyte proliferation, differentiation, and melanogenesis and may increase proliferation and migration of primary retinal pigment epithelial (RPE) cells. Activated by the short chain fatty acids (SCFA), acetate and propionate. In response to SCFA, may positively regulate renin secretion and increase blood pressure. May also be activated by steroid hormones and regulate cell proliferation. Activated by L-lactate in glomus cells. In Mus musculus (Mouse), this protein is Olfactory receptor 51E2 (Or51e2).